The primary structure comprises 706 residues: Probable E3 ubiquitin ligase complex SCF subunit sconB (706 aa).

A compositionally biased stretch (basic and acidic residues) spans 1–12; it reads MQSDDRSVREGS. 2 disordered regions span residues 1 to 43 and 56 to 76; these read MQSD…LLQQ and TAEE…SFGA. Positions 34–43 are enriched in low complexity; sequence QQQQQQLLQQ. The F-box domain occupies 203-249; the sequence is IDFLTALPPEISFKILCYLDTTSLCKAAQVSSRWRALADDDVVWHRM. WD repeat units follow at residues 377-414, 417-456, 458-494, 496-537, 589-632, 635-672, and 675-706; these read GHTN…ELRT, GHQS…STYT, HRGG…TFLL, GHTD…RTFH, ATET…CLRT, GHLE…CERT, and GHSG…SFRN.

Belongs to the WD repeat MET30/SCONB/SCON-2 family. As to quaternary structure, component of the SCF(sconB) E3 ubiquitin ligase complex.

Its pathway is protein modification; protein ubiquitination. Component of the SCF(sconB) E3 ubiquitin ligase complex involved in the regulation of sulfur metabolite repression, probably by mediating the inactivation or degradation of the metR transcription factor. The chain is Probable E3 ubiquitin ligase complex SCF subunit sconB (sconB) from Aspergillus flavus (strain ATCC 200026 / FGSC A1120 / IAM 13836 / NRRL 3357 / JCM 12722 / SRRC 167).